A 261-amino-acid chain; its full sequence is Endonuclease NucS (261 aa).

This sequence belongs to the NucS endonuclease family.

It localises to the cytoplasm. Functionally, cleaves both 3' and 5' ssDNA extremities of branched DNA structures. In Aeropyrum pernix (strain ATCC 700893 / DSM 11879 / JCM 9820 / NBRC 100138 / K1), this protein is Endonuclease NucS.